Here is a 1013-residue protein sequence, read N- to C-terminus: Probable beta-galactosidase B (1013 aa).

Positions 1-21 are cleaved as a signal peptide; sequence MTRILNCLLVLLACLGVSSKA. Y90 serves as a coordination point for substrate. Residue N100 is glycosylated (N-linked (GlcNAc...) asparagine). N135, A136, E137, and N195 together coordinate substrate. Residue E196 is the Proton donor of the active site. N211 carries an N-linked (GlcNAc...) asparagine glycan. Position 265 (Y265) interacts with substrate. C271 and C324 form a disulfide bridge. E308 serves as the catalytic Nucleophile. Substrate is bound at residue Y373. Residues N411, N442, N456, N626, N735, N768, and N775 are each glycosylated (N-linked (GlcNAc...) asparagine).

It belongs to the glycosyl hydrolase 35 family.

The protein resides in the secreted. The enzyme catalyses Hydrolysis of terminal non-reducing beta-D-galactose residues in beta-D-galactosides.. Cleaves beta-linked terminal galactosyl residues from gangliosides, glycoproteins, and glycosaminoglycans. The polypeptide is Probable beta-galactosidase B (lacB) (Penicillium rubens (strain ATCC 28089 / DSM 1075 / NRRL 1951 / Wisconsin 54-1255) (Penicillium chrysogenum)).